A 170-amino-acid polypeptide reads, in one-letter code: Bifunctional protein PyrR (170 aa).

The short motif at 90-102 (LVLVDDVLMSGRT) is the PRPP-binding element.

Belongs to the purine/pyrimidine phosphoribosyltransferase family. PyrR subfamily.

It catalyses the reaction UMP + diphosphate = 5-phospho-alpha-D-ribose 1-diphosphate + uracil. In terms of biological role, regulates the transcription of the pyrimidine nucleotide (pyr) operon in response to exogenous pyrimidines. Functionally, also displays a weak uracil phosphoribosyltransferase activity which is not physiologically significant. The chain is Bifunctional protein PyrR from Pseudomonas paraeruginosa (strain DSM 24068 / PA7) (Pseudomonas aeruginosa (strain PA7)).